The sequence spans 662 residues: Probable conjugal transfer protein TrbE part 2 (662 aa).

307–314 contacts ATP; sequence GPTGSGKS.

The protein belongs to the TrbE/VirB4 family.

This Sinorhizobium fredii (strain NBRC 101917 / NGR234) protein is Probable conjugal transfer protein TrbE part 2 (trbEB).